A 313-amino-acid polypeptide reads, in one-letter code: 4-hydroxy-3-methylbut-2-enyl diphosphate reductase (313 aa).

Cys-12 lines the [4Fe-4S] cluster pocket. (2E)-4-hydroxy-3-methylbut-2-enyl diphosphate is bound by residues His-41 and His-74. The dimethylallyl diphosphate site is built by His-41 and His-74. Isopentenyl diphosphate contacts are provided by His-41 and His-74. Cys-96 is a [4Fe-4S] cluster binding site. His-124 serves as a coordination point for (2E)-4-hydroxy-3-methylbut-2-enyl diphosphate. His-124 is a binding site for dimethylallyl diphosphate. Residue His-124 coordinates isopentenyl diphosphate. The Proton donor role is filled by Glu-126. (2E)-4-hydroxy-3-methylbut-2-enyl diphosphate is bound at residue Thr-167. Position 197 (Cys-197) interacts with [4Fe-4S] cluster. Residues Ser-225, Ser-226, Asn-227, and Ser-269 each contribute to the (2E)-4-hydroxy-3-methylbut-2-enyl diphosphate site. Residues Ser-225, Ser-226, Asn-227, and Ser-269 each contribute to the dimethylallyl diphosphate site. 4 residues coordinate isopentenyl diphosphate: Ser-225, Ser-226, Asn-227, and Ser-269.

Belongs to the IspH family. [4Fe-4S] cluster is required as a cofactor.

The catalysed reaction is isopentenyl diphosphate + 2 oxidized [2Fe-2S]-[ferredoxin] + H2O = (2E)-4-hydroxy-3-methylbut-2-enyl diphosphate + 2 reduced [2Fe-2S]-[ferredoxin] + 2 H(+). The enzyme catalyses dimethylallyl diphosphate + 2 oxidized [2Fe-2S]-[ferredoxin] + H2O = (2E)-4-hydroxy-3-methylbut-2-enyl diphosphate + 2 reduced [2Fe-2S]-[ferredoxin] + 2 H(+). It participates in isoprenoid biosynthesis; dimethylallyl diphosphate biosynthesis; dimethylallyl diphosphate from (2E)-4-hydroxy-3-methylbutenyl diphosphate: step 1/1. It functions in the pathway isoprenoid biosynthesis; isopentenyl diphosphate biosynthesis via DXP pathway; isopentenyl diphosphate from 1-deoxy-D-xylulose 5-phosphate: step 6/6. In terms of biological role, catalyzes the conversion of 1-hydroxy-2-methyl-2-(E)-butenyl 4-diphosphate (HMBPP) into a mixture of isopentenyl diphosphate (IPP) and dimethylallyl diphosphate (DMAPP). Acts in the terminal step of the DOXP/MEP pathway for isoprenoid precursor biosynthesis. This Photobacterium profundum (strain SS9) protein is 4-hydroxy-3-methylbut-2-enyl diphosphate reductase.